Consider the following 84-residue polypeptide: Small ribosomal subunit protein bS20 (84 aa).

This sequence belongs to the bacterial ribosomal protein bS20 family.

Functionally, binds directly to 16S ribosomal RNA. This chain is Small ribosomal subunit protein bS20, found in Phocaeicola vulgatus (strain ATCC 8482 / DSM 1447 / JCM 5826 / CCUG 4940 / NBRC 14291 / NCTC 11154) (Bacteroides vulgatus).